Reading from the N-terminus, the 442-residue chain is MKKVFIRTFGCQMNEYDSDKMLAVLAEEHGGIEQVTQADEADIILFNTCSVREKAQEKVFSDLGRVRPLKEKNPGLIIGVAGCVASQEGENIIKRAPYVDVVFGPQTLHRLPKMIVDKETSGLSQVDISFPEIEKFDHLPPARVEGGAAFVSIMEGCSKYCSFCVVPYTRGEEFSRPLNDVLTEIANLAQQGVKEINLLGQNVNAYCGEMDDGEICDFATLLRIVHEIPGIERMRFTTSHPREFTDSIIECYRDLPKLVSHLHLPIQSGSDRVLSAMKRGYTALEYKSIIRKLRAIRPDLCLSSDFIVGFPGETEREFEQTLKLVKDIAFDLSFVFIYSPRPGTPAANLHDDTPHEEKVRRLEALNEVIEAETARINQTMIGTVQRCLVEGISKKDPDQLQARTANNRVVNFTGTPNMINQMIDLEITEAYTFSLRGKVVEA.

The region spanning 2–120 (KKVFIRTFGC…LPKMIVDKET (119 aa)) is the MTTase N-terminal domain. 6 residues coordinate [4Fe-4S] cluster: Cys11, Cys49, Cys83, Cys157, Cys161, and Cys164. Positions 143–375 (RVEGGAAFVS…NEVIEAETAR (233 aa)) constitute a Radical SAM core domain. In terms of domain architecture, TRAM spans 378 to 441 (QTMIGTVQRC…TFSLRGKVVE (64 aa)).

This sequence belongs to the methylthiotransferase family. MiaB subfamily. Monomer. [4Fe-4S] cluster is required as a cofactor.

The protein resides in the cytoplasm. The catalysed reaction is N(6)-dimethylallyladenosine(37) in tRNA + (sulfur carrier)-SH + AH2 + 2 S-adenosyl-L-methionine = 2-methylsulfanyl-N(6)-dimethylallyladenosine(37) in tRNA + (sulfur carrier)-H + 5'-deoxyadenosine + L-methionine + A + S-adenosyl-L-homocysteine + 2 H(+). Catalyzes the methylthiolation of N6-(dimethylallyl)adenosine (i(6)A), leading to the formation of 2-methylthio-N6-(dimethylallyl)adenosine (ms(2)i(6)A) at position 37 in tRNAs that read codons beginning with uridine. This chain is tRNA-2-methylthio-N(6)-dimethylallyladenosine synthase, found in Neisseria meningitidis serogroup C (strain 053442).